The primary structure comprises 372 residues: Phospho-N-acetylmuramoyl-pentapeptide-transferase (372 aa).

Transmembrane regions (helical) follow at residues 21-41 (SLTL…MIFG), 71-91 (TPTM…LLWA), 98-118 (VWIL…DDWL), 134-154 (YFWL…IATL), 176-196 (MIPF…YFVI), 211-231 (GLAI…AYVS), 251-271 (VIIV…FNAH), 275-295 (VFMG…IAVM), 300-320 (IAFA…MLQV), and 349-369 (QVVA…LMTL).

Belongs to the glycosyltransferase 4 family. MraY subfamily. Mg(2+) is required as a cofactor.

Its subcellular location is the cell inner membrane. The enzyme catalyses UDP-N-acetyl-alpha-D-muramoyl-L-alanyl-gamma-D-glutamyl-meso-2,6-diaminopimeloyl-D-alanyl-D-alanine + di-trans,octa-cis-undecaprenyl phosphate = di-trans,octa-cis-undecaprenyl diphospho-N-acetyl-alpha-D-muramoyl-L-alanyl-D-glutamyl-meso-2,6-diaminopimeloyl-D-alanyl-D-alanine + UMP. Its pathway is cell wall biogenesis; peptidoglycan biosynthesis. Its function is as follows. Catalyzes the initial step of the lipid cycle reactions in the biosynthesis of the cell wall peptidoglycan: transfers peptidoglycan precursor phospho-MurNAc-pentapeptide from UDP-MurNAc-pentapeptide onto the lipid carrier undecaprenyl phosphate, yielding undecaprenyl-pyrophosphoryl-MurNAc-pentapeptide, known as lipid I. The polypeptide is Phospho-N-acetylmuramoyl-pentapeptide-transferase (Psychrobacter arcticus (strain DSM 17307 / VKM B-2377 / 273-4)).